We begin with the raw amino-acid sequence, 47 residues long: Wound-induced basic protein (47 aa).

Positions methionine 1 to glutamate 47 are disordered. Basic and acidic residues predominate over residues serine 20–glutamate 40.

In terms of tissue distribution, abundant in radicals and epicotyls of seedlings and higher in the roots than in stems and leaves of mature plants.

The sequence is that of Wound-induced basic protein (PR4) from Phaseolus vulgaris (Kidney bean).